The primary structure comprises 117 residues: Protein Wnt-6 (117 aa).

The O-palmitoleoyl serine; by PORCN moiety is linked to residue Ser1. Cys83 and Cys98 are joined by a disulfide. Residue Asn84 is glycosylated (N-linked (GlcNAc...) asparagine).

It belongs to the Wnt family. Post-translationally, palmitoleoylation is required for efficient binding to frizzled receptors. Depalmitoleoylation leads to Wnt signaling pathway inhibition.

The protein localises to the secreted. It is found in the extracellular space. Its subcellular location is the extracellular matrix. Ligand for members of the frizzled family of seven transmembrane receptors. Probable developmental protein. May be a signaling molecule which affects the development of discrete regions of tissues. Is likely to signal over only few cell diameters. In Plethodon jordani (Red-cheeked salamander), this protein is Protein Wnt-6 (WNT-6).